The primary structure comprises 632 residues: 1-deoxy-D-xylulose-5-phosphate synthase (632 aa).

Thiamine diphosphate-binding positions include histidine 74 and 115-117 (AHS). A Mg(2+)-binding site is contributed by aspartate 146. Residues 147-148 (GA), asparagine 176, tyrosine 283, and glutamate 365 contribute to the thiamine diphosphate site. Asparagine 176 is a Mg(2+) binding site.

This sequence belongs to the transketolase family. DXPS subfamily. Homodimer. It depends on Mg(2+) as a cofactor. Requires thiamine diphosphate as cofactor.

It carries out the reaction D-glyceraldehyde 3-phosphate + pyruvate + H(+) = 1-deoxy-D-xylulose 5-phosphate + CO2. It participates in metabolic intermediate biosynthesis; 1-deoxy-D-xylulose 5-phosphate biosynthesis; 1-deoxy-D-xylulose 5-phosphate from D-glyceraldehyde 3-phosphate and pyruvate: step 1/1. In terms of biological role, catalyzes the acyloin condensation reaction between C atoms 2 and 3 of pyruvate and glyceraldehyde 3-phosphate to yield 1-deoxy-D-xylulose-5-phosphate (DXP). This is 1-deoxy-D-xylulose-5-phosphate synthase from Paraburkholderia phymatum (strain DSM 17167 / CIP 108236 / LMG 21445 / STM815) (Burkholderia phymatum).